We begin with the raw amino-acid sequence, 342 residues long: MVQTSRHRRSTRGSKMVSWSVMAKIQEILQKKMVREFLAEFMSTYVMMVFGLGSVAHMVLNKKYGSYLGVNLGFGFGVTMGVHVAGHISGAHMNAAVTFANCALGRVPWRKFPVYVLGQFLGSFLAAATIYTLFYTAILHFSGGQLMVTGPVATAGIFATYLPDHMTLWRGFLNEAWLTGMLQLCLFAITDQENNAALPGTQALVIGILVVIIGVSLGMNTGYAINPSRDLPPRVFTFIAGWGKEVFSEGENWWWVPVVAPLLGACLGGIIYLVFIGSTTPREPLKLEDSVAYEDHGITVLPKMGSHEPTISPLTPVSVSPANRSSVRPAPPLHESMALGHF.

Topologically, residues Met1–Glu36 are cytoplasmic. Ser20 is modified (phosphoserine). A helical membrane pass occupies residues Phe37–Ser54. Topologically, residues Val55–Tyr67 are extracellular. Residues Leu68–Ala85 traverse the membrane as a helical segment. The Cytoplasmic segment spans residues Gly86–Ser89. An intramembrane region (discontinuously helical) is located at residues Gly90–Ala103. Residues Asn94 to Ala96 carry the NPA 1 motif. The Cytoplasmic portion of the chain corresponds to Leu104–Lys111. Residues Phe112–Thr132 traverse the membrane as a helical segment. Over Leu133–Thr167 the chain is Extracellular. The chain crosses the membrane as a helical span at residues Leu168 to Ala188. Residues Ile189–Gly200 lie on the Cytoplasmic side of the membrane. A helical membrane pass occupies residues Thr201–Leu217. The Extracellular portion of the chain corresponds to Gly218 to Thr221. Positions Gly222–Val235 form an intramembrane region, discontinuously helical. Positions Asn226–Ser228 match the NPA 2 motif. Residues Phe236 to Trp253 lie on the Extracellular side of the membrane. Residues Trp254–Phe275 form a helical membrane-spanning segment. At Ile276 to Phe342 the chain is on the cytoplasmic side.

It belongs to the MIP/aquaporin (TC 1.A.8) family. Homotetramer; each monomer provides an independent glycerol/water pore. Two homotetramers on opposing membranes can dimerize, forming a cell-cell junction. Interacts with PLIN1. Post-translationally, phosphorylation by PKA could prevent the interaction with PLIN1.

The protein localises to the cell membrane. The protein resides in the cytoplasmic vesicle membrane. It is found in the lipid droplet. It catalyses the reaction glycerol(in) = glycerol(out). It carries out the reaction H2O(in) = H2O(out). The enzyme catalyses urea(in) = urea(out). Its activity is regulated as follows. Glycerol transport is regulated by pH, with the porin being permeable to glycerol at pH 7.4 but not at pH 5.5. Water permeability, however, is not influenced by pH. Its function is as follows. Aquaglyceroporins form homotetrameric transmembrane channels, with each monomer independently mediating glycerol and water transport across the plasma membrane along their osmotic gradient. Could also be permeable to urea. Mediates the efflux of glycerol, formed upon triglyceride hydrolysis, to avoid its accumulation in adipocytes and to make it available to other tissues. In the kidney, mediates the reabsorption of glycerol, preventing its loss in urine, again participating to energy homeostasis. In pancreatic beta cells, it also mediates the efflux of glycerol, regulating its intracellular levels. In Macaca fascicularis (Crab-eating macaque), this protein is Aquaporin-7 (AQP7).